The primary structure comprises 293 residues: Formamidopyrimidine-DNA glycosylase (293 aa).

Catalysis depends on Pro-2, which acts as the Schiff-base intermediate with DNA. The active-site Proton donor is Glu-3. Lys-58 serves as the catalytic Proton donor; for beta-elimination activity. DNA is bound by residues His-104, Arg-123, and Lys-166. The FPG-type zinc finger occupies Lys-257–Lys-293. Arg-283 (proton donor; for delta-elimination activity) is an active-site residue.

It belongs to the FPG family. In terms of assembly, monomer. The cofactor is Zn(2+).

The enzyme catalyses Hydrolysis of DNA containing ring-opened 7-methylguanine residues, releasing 2,6-diamino-4-hydroxy-5-(N-methyl)formamidopyrimidine.. It catalyses the reaction 2'-deoxyribonucleotide-(2'-deoxyribose 5'-phosphate)-2'-deoxyribonucleotide-DNA = a 3'-end 2'-deoxyribonucleotide-(2,3-dehydro-2,3-deoxyribose 5'-phosphate)-DNA + a 5'-end 5'-phospho-2'-deoxyribonucleoside-DNA + H(+). In terms of biological role, involved in base excision repair of DNA damaged by oxidation or by mutagenic agents. Acts as a DNA glycosylase that recognizes and removes damaged bases. Has a preference for oxidized purines, such as 7,8-dihydro-8-oxoguanine (8-oxoG). Has AP (apurinic/apyrimidinic) lyase activity and introduces nicks in the DNA strand. Cleaves the DNA backbone by beta-delta elimination to generate a single-strand break at the site of the removed base with both 3'- and 5'-phosphates. This chain is Formamidopyrimidine-DNA glycosylase, found in Bradyrhizobium diazoefficiens (strain JCM 10833 / BCRC 13528 / IAM 13628 / NBRC 14792 / USDA 110).